We begin with the raw amino-acid sequence, 373 residues long: MSLLLLLLLVSYYVGTLGTHTEIKRVAEEKVTLPCHHQLGLPEKDTLDIEWLLTDNEGNQKVVITYSSRHVYNNLTEEQKGRVAFASNFLAGDASLQIEPLKPSDEGRYTCKVKNSGRYVWSHVILKVLVRPSKPKCELEGELTEGSDLTLQCESSSGTEPIVYYWQRIREKEGEDERLPPKSRIDYNHPGRVLLQNLTMSYSGLYQCTAGNEAGKESCVVRVTVQYVQSIGMVAGAVTGIVAGALLIFLLVWLLIRRKDKERYEEEERPNEIREDAEAPKARLVKPSSSSSGSRSSRSGSSSTRSTANSASRSQRTLSTDAAPQPGLATQAYSLVGPEVRGSEPKKVHHANLTKAETTPSMIPSQSRAFQTV.

The N-terminal stretch at Met-1–Gly-18 is a signal peptide. 2 consecutive Ig-like C2-type domains span residues Thr-19–Lys-127 and Pro-135–Thr-224. Over Thr-19–Ala-235 the chain is Extracellular. 2 disulfide bridges follow: Cys-35/Cys-111 and Cys-153/Cys-208. Asn-74 and Asn-197 each carry an N-linked (GlcNAc...) asparagine glycan. The chain crosses the membrane as a helical span at residues Gly-236–Ile-256. Topologically, residues Arg-257–Val-373 are cytoplasmic. The span at Tyr-264–Lys-281 shows a compositional bias: basic and acidic residues. The interval Tyr-264–Val-373 is disordered. Positions Ser-288–Ser-314 are enriched in low complexity. The span at Lys-355 to Val-373 shows a compositional bias: polar residues.

As to expression, predominantly expressed in epithelial cells within different tissues and in the white adipose tissue. Expressed at high levels in small intestine and placenta, at intermediate levels in the heart, skeletal muscle, colon, spleen, kidney and lung and at low levels in the liver and peripheral blood leukocytes. Highly abundant in the intestine during embryo and fetal development (at protein level).

It localises to the cell junction. The protein localises to the tight junction. Its subcellular location is the cell membrane. Its function is as follows. May be involved in the cell-cell adhesion. May play a role in adipocyte differentiation and development of obesity. Is required for normal small intestine development. In Homo sapiens (Human), this protein is CXADR-like membrane protein (CLMP).